The following is a 697-amino-acid chain: Tryptophan synthase (697 aa).

Positions 1-298 are tryptophan synthase alpha chain; the sequence is MTEQIKKTFL…AVVEPINEMY (298 aa). Catalysis depends on proton acceptor residues Glu50 and Asp61. The tryptophan synthase beta chain stretch occupies residues 298-697; sequence YLPQKYGMFG…GPKIGWDLRF (400 aa). Lys381 bears the N6-(pyridoxal phosphate)lysine mark.

This sequence in the N-terminal section; belongs to the TrpA family. The protein in the C-terminal section; belongs to the TrpB family. It depends on pyridoxal 5'-phosphate as a cofactor.

The enzyme catalyses (1S,2R)-1-C-(indol-3-yl)glycerol 3-phosphate + L-serine = D-glyceraldehyde 3-phosphate + L-tryptophan + H2O. It functions in the pathway amino-acid biosynthesis; L-tryptophan biosynthesis; L-tryptophan from chorismate: step 5/5. The protein is Tryptophan synthase (trp2) of Schizosaccharomyces pombe (strain 972 / ATCC 24843) (Fission yeast).